The sequence spans 176 residues: Inorganic pyrophosphatase (176 aa).

Residues K30, R44, and Y56 each contribute to the substrate site. Positions 66, 71, and 103 each coordinate Mg(2+). Y142 contributes to the substrate binding site.

This sequence belongs to the PPase family. As to quaternary structure, homohexamer. Mg(2+) is required as a cofactor.

The protein localises to the cytoplasm. It carries out the reaction diphosphate + H2O = 2 phosphate + H(+). Catalyzes the hydrolysis of inorganic pyrophosphate (PPi) forming two phosphate ions. The chain is Inorganic pyrophosphatase from Vibrio cholerae serotype O1 (strain ATCC 39315 / El Tor Inaba N16961).